The following is a 662-amino-acid chain: DNA topoisomerase 4 subunit B (662 aa).

ATP-binding positions include Tyr-20, Asn-60, Asp-87, 129–135, and Lys-359; that span reads GLHGVGV. Positions 439-553 constitute a Toprim domain; that stretch reads TELFIVEGDS…DGHLYLAKPP (115 aa). Mg(2+)-binding residues include Glu-445, Asp-518, and Asp-520.

This sequence belongs to the type II topoisomerase family. ParE type 1 subfamily. As to quaternary structure, heterotetramer composed of ParC and ParE. The cofactor is Mg(2+). It depends on Mn(2+) as a cofactor. Ca(2+) is required as a cofactor.

It catalyses the reaction ATP-dependent breakage, passage and rejoining of double-stranded DNA.. In terms of biological role, topoisomerase IV is essential for chromosome segregation. It relaxes supercoiled DNA. Performs the decatenation events required during the replication of a circular DNA molecule. The polypeptide is DNA topoisomerase 4 subunit B (Rickettsia bellii (strain RML369-C)).